A 260-amino-acid chain; its full sequence is 2-amino-3,7-dideoxy-D-threo-hept-6-ulosonate synthase 1 (260 aa).

The active-site Proton acceptor is D26. 1-deoxy-D-threo-hexo-2,5-diulose 6-phosphate-binding positions include 26–30 and 144–146; these read DHGIT and YPR. Y144 serves as the catalytic Proton donor. The active-site Schiff-base intermediate with substrate is the K172. 1-deoxy-D-threo-hexo-2,5-diulose 6-phosphate-binding positions include 194–195 and 221–222; these read GG and GR.

This sequence belongs to the DeoC/FbaB aldolase family. ADHS subfamily. Homodecamer.

It catalyses the reaction 1-deoxy-D-threo-hexo-2,5-diulose 6-phosphate + L-aspartate 4-semialdehyde = 2,3-dioxopropyl phosphate + 2-amino-2,3,7-trideoxy-D-lyxo-hept-6-ulosonate. Its function is as follows. Catalyzes a transaldol reaction between 6-deoxy-5-ketofructose 1-phosphate (DKFP) and L-aspartate semialdehyde (ASA) with an elimination of hydroxypyruvaldehyde phosphate to yield 2-amino-3,7-dideoxy-D-threo-hept-6-ulosonate (ADH). Plays a key role in an alternative pathway of the biosynthesis of 3-dehydroquinate (DHQ), which is involved in the canonical pathway for the biosynthesis of aromatic amino acids. This chain is 2-amino-3,7-dideoxy-D-threo-hept-6-ulosonate synthase 1, found in Archaeoglobus fulgidus (strain ATCC 49558 / DSM 4304 / JCM 9628 / NBRC 100126 / VC-16).